A 568-amino-acid polypeptide reads, in one-letter code: Pyruvate carboxylase subunit B (568 aa).

One can recognise a Pyruvate carboxyltransferase domain in the interval 4–264 (IKVVETAFRD…DTGLDLEILK (261 aa)). Substrate-binding positions include 12 to 16 (RDAHQ) and arginine 83. Residue aspartate 13 coordinates a divalent metal cation. A divalent metal cation is bound by residues lysine 174, histidine 203, and histidine 205. At lysine 174 the chain carries N6-carboxylysine. Threonine 339 is a substrate binding site. The 76-residue stretch at 493–568 (PEPVDVEGAV…ETGDIIMVIK (76 aa)) folds into the Biotinyl-binding domain. Position 534 is an N6-biotinyllysine (lysine 534).

As to quaternary structure, heterooctamer of four A and four B subunits. The cofactor is Mg(2+). Requires Mn(2+) as cofactor. It depends on Co(2+) as a cofactor.

It carries out the reaction hydrogencarbonate + pyruvate + ATP = oxaloacetate + ADP + phosphate + H(+). Its activity is regulated as follows. Inhibited by ADP and alpha-ketoglutarate. Its function is as follows. Pyruvate carboxylase catalyzes a 2-step reaction, involving the ATP-dependent carboxylation of the covalently attached biotin in the first step and the transfer of the carboxyl group to pyruvate in the second. In Methanothermobacter thermautotrophicus (strain ATCC 29096 / DSM 1053 / JCM 10044 / NBRC 100330 / Delta H) (Methanobacterium thermoautotrophicum), this protein is Pyruvate carboxylase subunit B (pycB).